Consider the following 246-residue polypeptide: MTQTFADQKRKTVETAEFTEDGRYKRKVRSFVLRTGRLSEFQRNMMNDNWGTLGLDYQTEPFDFAKIYGNDNPIVLEIGFGMGKSLVDMAFANPDKNYLGIEVHTPGVGACIAYAVEKGVTNLRVICHDATEILRDSIADGALGGLQLFFPDPWHKAKHHKRRIVQPHFVTQVIQKLGKNGFIHMATDWENYAEQMLEVLSANTDLVNTSKNGDYIPRPDFRPLTKFEARGYKLGHGVWDLYFVKK.

Residues E77, E102, D129, and D152 each contribute to the S-adenosyl-L-methionine site. D152 is a catalytic residue. Substrate contacts are provided by residues K156, D188, and 225-228 (TKFE).

Belongs to the class I-like SAM-binding methyltransferase superfamily. TrmB family.

The catalysed reaction is guanosine(46) in tRNA + S-adenosyl-L-methionine = N(7)-methylguanosine(46) in tRNA + S-adenosyl-L-homocysteine. It participates in tRNA modification; N(7)-methylguanine-tRNA biosynthesis. Its function is as follows. Catalyzes the formation of N(7)-methylguanine at position 46 (m7G46) in tRNA. This chain is tRNA (guanine-N(7)-)-methyltransferase, found in Haemophilus influenzae (strain 86-028NP).